The primary structure comprises 155 residues: Microsomal glutathione S-transferase 1 (155 aa).

Over 3–9 the chain is Lumenal; the sequence is DLTQVMD. The chain crosses the membrane as a helical span at residues 10 to 33; sequence DEVFMAFASYATIILSKMMLMSTA. Residues 34 to 62 lie on the Cytoplasmic side of the membrane; sequence TAFYRLTRKVFANPEDCVAFGKGENAKKY. Arg38 is a binding site for glutathione. N6-acetyllysine occurs at positions 42, 55, and 60. A helical transmembrane segment spans residues 63–96; the sequence is LRTDDRVERVRRAHLNDLENIIPFLGIGLLYSLS. Glutathione-binding residues include Arg73, Arg74, His76, and Glu81. The Lumenal portion of the chain corresponds to 97 to 99; the sequence is GPD. A helical transmembrane segment spans residues 100–123; the sequence is PSTAILHFRLFVGARIYHTIAYLT. Tyr121 serves as a coordination point for glutathione. The Cytoplasmic segment spans residues 124–128; that stretch reads PLPQP. Residues 129–148 traverse the membrane as a helical segment; the sequence is NRALSFFVGYGVTLSMAYRL. Residues 149 to 155 lie on the Lumenal side of the membrane; the sequence is LKSKLYL.

It belongs to the MAPEG family. In terms of assembly, homotrimer; The trimer binds only one molecule of glutathione. In terms of tissue distribution, highly expressed in liver.

It localises to the endoplasmic reticulum membrane. Its subcellular location is the mitochondrion outer membrane. It catalyses the reaction RX + glutathione = an S-substituted glutathione + a halide anion + H(+). Conjugation of reduced glutathione to a wide number of exogenous and endogenous hydrophobic electrophiles. The polypeptide is Microsomal glutathione S-transferase 1 (MGST1) (Homo sapiens (Human)).